The primary structure comprises 236 residues: 2,3,4,5-tetrahydropyridine-2,6-dicarboxylate N-acetyltransferase (236 aa).

This sequence belongs to the transferase hexapeptide repeat family. DapH subfamily.

The enzyme catalyses (S)-2,3,4,5-tetrahydrodipicolinate + acetyl-CoA + H2O = L-2-acetamido-6-oxoheptanedioate + CoA. It functions in the pathway amino-acid biosynthesis; L-lysine biosynthesis via DAP pathway; LL-2,6-diaminopimelate from (S)-tetrahydrodipicolinate (acetylase route): step 1/3. Functionally, catalyzes the transfer of an acetyl group from acetyl-CoA to tetrahydrodipicolinate. The chain is 2,3,4,5-tetrahydropyridine-2,6-dicarboxylate N-acetyltransferase from Geobacillus kaustophilus (strain HTA426).